We begin with the raw amino-acid sequence, 275 residues long: L-aspartate dehydrogenase (275 aa).

Positions 130 and 196 each coordinate NAD(+). The active site involves H226.

It belongs to the L-aspartate dehydrogenase family.

It carries out the reaction L-aspartate + NADP(+) + H2O = oxaloacetate + NH4(+) + NADPH + H(+). The catalysed reaction is L-aspartate + NAD(+) + H2O = oxaloacetate + NH4(+) + NADH + H(+). It functions in the pathway cofactor biosynthesis; NAD(+) biosynthesis; iminoaspartate from L-aspartate (dehydrogenase route): step 1/1. Specifically catalyzes the NAD or NADP-dependent dehydrogenation of L-aspartate to iminoaspartate. The chain is L-aspartate dehydrogenase from Ruegeria pomeroyi (strain ATCC 700808 / DSM 15171 / DSS-3) (Silicibacter pomeroyi).